A 217-amino-acid chain; its full sequence is MKRQSALIVFSGGQDSTTCLFWALKHYEIVELVTFAYGQRHSLEIEVAKEIAQEQGLKHHVLDMSLLGQITENALTSDIDIEAEEGEVPNTFVDGRNHLFLSFAAVLAKQRGIIDIVTGVCETDFSGYPDCRDVFVKSLNVTLNLAMAYDFVIQTPLMWLDKAETWALADQLGAFDYVREKTLTCYNGIIGTGCGDCPACHLRQKGLEKYLAEKGDA.

10–20 (FSGGQDSTTCL) contributes to the ATP binding site. 4 residues coordinate Zn(2+): C185, C194, C197, and C200.

The protein belongs to the QueC family. As to quaternary structure, homodimer. The cofactor is Zn(2+).

The catalysed reaction is 7-carboxy-7-deazaguanine + NH4(+) + ATP = 7-cyano-7-deazaguanine + ADP + phosphate + H2O + H(+). It functions in the pathway purine metabolism; 7-cyano-7-deazaguanine biosynthesis. Catalyzes the ATP-dependent conversion of 7-carboxy-7-deazaguanine (CDG) to 7-cyano-7-deazaguanine (preQ(0)). The protein is 7-cyano-7-deazaguanine synthase of Streptococcus thermophilus (strain ATCC BAA-491 / LMD-9).